Reading from the N-terminus, the 738-residue chain is Flowering time control protein FCA (738 aa).

The interval 1–118 (MHRGGDRSTD…RGDHSDHDNR (118 aa)) is disordered. Gly residues-rich tracts occupy residues 52 to 70 (RGGGGGGGDGGGGGGGGGR) and 81 to 98 (SGGGGYRSGGGGEYGEPG). Residues 109–118 (RGDHSDHDNR) show a composition bias toward basic and acidic residues. RRM domains are found at residues 122–203 (VKLF…YADG) and 213–293 (HKLF…FADP). Disordered regions lie at residues 292–451 (DPKR…PAQQ) and 566–595 (QQSNLNHQQPTQGQPVQSSNPGAPNAIIPS). Residues 301-311 (SRGGPAFGGPG) show a composition bias toward gly residues. Residues 342–358 (HPSSPRSAPHQFNNFGS) show a composition bias toward polar residues. Low complexity predominate over residues 368–377 (TVTSTTDTAT). Residues 383–401 (FSGNGSLSSQTAVPSSSHM) show a composition bias toward polar residues. Residues 435 to 451 (QLQNNQQGQPLQGPAQQ) are compositionally biased toward low complexity. The span at 575–595 (PTQGQPVQSSNPGAPNAIIPS) shows a compositional bias: polar residues. The WW domain occupies 609 to 642 (VPLTCNWTEHTSPEGFKYYYNSITRESKWDKPEE). Positions 670–738 (MQQLQSPPQA…QSAQERAWKS (69 aa)) are disordered. A compositionally biased stretch (low complexity) spans 683–706 (PAMQPVQQIPQAQQGQQQMQMKQQ). Polar residues predominate over residues 723-732 (RIQQGIQSAQ).

Interacts with FY. Binds to SF1, FIK, RPRD1B, OsI_31983 and MADS8.

The protein resides in the nucleus. Its function is as follows. Plays a major role in the promotion of the transition of the vegetative meristem to reproductive development. Required for RNA-mediated chromatin silencing of a range of loci in the genome. Cotranscriptionally recognizes aberrant RNA and marks it for silencing. Controls alternative cleavage and polyadenylation on pre-mRNAs and antisense RNAs. Regulates flowering time, seed size and cell volume, probably via the modulation of cell size. This is Flowering time control protein FCA from Oryza sativa subsp. indica (Rice).